The following is a 62-amino-acid chain: uncharacterized protein (62 aa).

This is an uncharacterized protein from Escherichia coli O157:H7.